A 76-amino-acid chain; its full sequence is Acyl carrier protein (76 aa).

The region spanning 1 to 75 (MVFEKIKALI…DIVFYITKNT (75 aa)) is the Carrier domain. S35 is subject to O-(pantetheine 4'-phosphoryl)serine.

It belongs to the acyl carrier protein (ACP) family. In terms of processing, 4'-phosphopantetheine is transferred from CoA to a specific serine of apo-ACP by AcpS. This modification is essential for activity because fatty acids are bound in thioester linkage to the sulfhydryl of the prosthetic group.

It is found in the cytoplasm. It functions in the pathway lipid metabolism; fatty acid biosynthesis. Functionally, carrier of the growing fatty acid chain in fatty acid biosynthesis. This Onion yellows phytoplasma (strain OY-M) protein is Acyl carrier protein.